The following is a 270-amino-acid chain: MASACASSTIAAVAFSSPSSRRNGSIVGTTKASFLGGRRLRVSKYSTTPTARSATTVCVAADPDRPLWFPGSTPPPWLDGSLPGDFGFDPLGLASDPESLRWNQQAELVHCRWAMLGAAGIFIPELLTKIGILNTPSWYTAGEQEYFTDTTTLFIVELVLIGWAEGRRWADIIKPGCVNTDPIFPNNKLTGTDVGYPGGLWFDPLGWGSGSPAKIKELRTKEIKNGRLAMLAVMGAWFQHIYTGTGPIDNLFAHLADPGHATIFAAFSPK.

A chloroplast-targeting transit peptide spans 1–42; sequence MASACASSTIAAVAFSSPSSRRNGSIVGTTKASFLGGRRLRV. W68 is a binding site for chlorophyll b. Chlorophyll a-binding residues include F88, E107, and H110. R112 serves as a coordination point for chlorophyll b. A helical transmembrane segment spans residues 113 to 133; it reads WAMLGAAGIFIPELLTKIGIL. Q144 serves as a coordination point for chlorophyll a. Residues 146–166 traverse the membrane as a helical segment; sequence YFTDTTTLFIVELVLIGWAEG. I155, E165, and R168 together coordinate chlorophyll b. Chlorophyll a is bound by residues K221, E222, N225, R227, Q239, and H254. The chain crosses the membrane as a helical span at residues 228-248; the sequence is LAMLAVMGAWFQHIYTGTGPI.

This sequence belongs to the light-harvesting chlorophyll a/b-binding (LHC) protein family. As to quaternary structure, the LHC complex consists of chlorophyll a-b binding proteins. Requires Binds at least 14 chlorophylls (8 Chl-a and 6 Chl-b) and carotenoids such as lutein and neoxanthin. as cofactor. Photoregulated by reversible phosphorylation of its threonine residues.

It is found in the plastid. It localises to the chloroplast thylakoid membrane. The light-harvesting complex (LHC) functions as a light receptor, it captures and delivers excitation energy to photosystems with which it is closely associated. The polypeptide is Chlorophyll a-b binding protein 7, chloroplastic (CAB7) (Solanum lycopersicum (Tomato)).